The primary structure comprises 726 residues: Probable dipeptidyl-peptidase 5 (726 aa).

Positions 1–19 (MAAAKWLIASLAFASSGLA) are cleaved as a signal peptide. Residues Asn96 and Asn252 are each glycosylated (N-linked (GlcNAc...) asparagine). The disordered stretch occupies residues 269–291 (AEPINKRNGPRTPQGIEGASSSP). Residue Ser558 is the Charge relay system of the active site. Asn605 is a glycosylation site (N-linked (GlcNAc...) asparagine). Active-site charge relay system residues include Asp641 and His673. N-linked (GlcNAc...) asparagine glycosylation occurs at Asn699.

It belongs to the peptidase S9C family.

Its subcellular location is the secreted. Functionally, extracellular dipeptidyl-peptidase which removes N-terminal dipeptides sequentially from polypeptides having unsubstituted N-termini. Contributes to pathogenicity. This is Probable dipeptidyl-peptidase 5 (DPP5) from Trichophyton verrucosum (strain HKI 0517).